The sequence spans 174 residues: NADH-ubiquinone oxidoreductase chain 6 (174 aa).

6 helical membrane-spanning segments follow: residues 1 to 21, 24 to 44, 47 to 67, 86 to 106, 111 to 131, and 151 to 171; these read MTYALFLLSVSLVMGFVGFSS, SPIYGGLVLIVSGVVGCAIIL, GGGYMGLMVFLIYLGGMMVVF, VEVLVSVLVGLAMEVGLVLWV, GMVVVVNFNSVGSWMIYEGEG, and WLVVVTGWTLFVGVYIVIEIA.

The protein belongs to the complex I subunit 6 family. As to quaternary structure, core subunit of respiratory chain NADH dehydrogenase (Complex I) which is composed of 45 different subunits.

It localises to the mitochondrion inner membrane. The catalysed reaction is a ubiquinone + NADH + 5 H(+)(in) = a ubiquinol + NAD(+) + 4 H(+)(out). Functionally, core subunit of the mitochondrial membrane respiratory chain NADH dehydrogenase (Complex I) which catalyzes electron transfer from NADH through the respiratory chain, using ubiquinone as an electron acceptor. Essential for the catalytic activity and assembly of complex I. This is NADH-ubiquinone oxidoreductase chain 6 (MT-ND6) from Pan troglodytes (Chimpanzee).